The sequence spans 706 residues: Protein argonaute (706 aa).

The N-terminal domain stretch occupies residues 1 to 108 (MGKEALLNLY…ELFRDFLTKT (108 aa)). A linker L1 region spans residues 109–165 (KVKDKFISDFYKKFRDKITVQGKNRKIALIPEVNEKVLKSEEGYFLLHLDLKFRIQP). Positions 168–259 (TLQTLLERND…YPATILKPVL (92 aa)) constitute a PAZ domain. Residues 263-334 (NLEDEERNEV…AKGKNTKVIT (72 aa)) form a linker L2 region. The mid domain stretch occupies residues 335–448 (NLRKFLELCR…YDFVKRELLK (114 aa)). A Piwi domain is found at 419–694 (LVIVFLEEYP…ITKLMLRGIE (276 aa)). Positions 449–706 (KMIPSQVILN…KKEGDIMYWL (258 aa)) are PIWI domain. Active-site residues include D502, E541, and D571. Residue D502 coordinates Mn(2+). Residue D571 participates in Mn(2+) binding. Positions 612-650 (FIKGYFYKLSEDSVILATYNQVYEGTHQPIKVRKVYGEL) are PIWI box. D683 is a catalytic residue. D683 is a binding site for Mn(2+).

This sequence belongs to the argonaute family. Long pAgo subfamily. Mg(2+) is required as a cofactor.

A DNA-guided RNA endonuclease. Uses short ssDNA sequences as guides (gDNA) to bind complementary target strands, resulting in cleavage of the target RNA. The cleavage site is 10 nucleotides downstream of the residue base paired with the 5'-end of the gDNA. Binds ssDNA better than ssRNA, binds dsDNA and DNA-RNA hybrids but does not bind dsRNA. A 2 nucleotide 3'-overhang (possibly on the guide strand) may help load nucleic acids into the complex. The sequence is that of Protein argonaute from Aquifex aeolicus (strain VF5).